The following is a 371-amino-acid chain: Putative glutamate--cysteine ligase 2 (371 aa).

Belongs to the glutamate--cysteine ligase type 2 family. YbdK subfamily.

The catalysed reaction is L-cysteine + L-glutamate + ATP = gamma-L-glutamyl-L-cysteine + ADP + phosphate + H(+). Its function is as follows. ATP-dependent carboxylate-amine ligase which exhibits weak glutamate--cysteine ligase activity. In Nitrosospira multiformis (strain ATCC 25196 / NCIMB 11849 / C 71), this protein is Putative glutamate--cysteine ligase 2.